The following is a 166-amino-acid chain: Chorion protein S18 (166 aa).

The first 17 residues, 1-17 (MMKFMCLFVCAIAAVSA), serve as a signal peptide directing secretion.

This sequence belongs to the chorion protein S15/S18 family.

The protein localises to the secreted. In terms of biological role, chorion membrane (egg shell) protein; plays a role in protecting the egg from the environment. The sequence is that of Chorion protein S18 (Cp18) from Drosophila grimshawi (Hawaiian fruit fly).